We begin with the raw amino-acid sequence, 450 residues long: UPF0210 protein CPF_1748 (450 aa).

It belongs to the UPF0210 family. As to quaternary structure, homodimer.

The protein is UPF0210 protein CPF_1748 of Clostridium perfringens (strain ATCC 13124 / DSM 756 / JCM 1290 / NCIMB 6125 / NCTC 8237 / Type A).